A 710-amino-acid polypeptide reads, in one-letter code: Ent-copalyl diphosphate synthase 1 (710 aa).

Lys-145 lines the substrate pocket. Positions 277 and 279 each coordinate Mg(2+). Residues 277–280 carry the DXDD motif motif; it reads DIDD. Lys-364 contributes to the substrate binding site.

This sequence belongs to the terpene synthase family. Tpsc subfamily. Mg(2+) serves as cofactor. As to expression, expressed in germinating seeds and leaves.

It carries out the reaction (2E,6E,10E)-geranylgeranyl diphosphate = ent-copalyl diphosphate. Its pathway is plant hormone biosynthesis; gibberellin biosynthesis. It functions in the pathway secondary metabolite biosynthesis; terpenoid biosynthesis. Functionally, involved in the biosynthesis of ent-kaurene diterpenoids natural products such as oridonin, miltiradiene, eriocalyxin B and nezukol, known to exhibit antitumor, anti-inflammatory and antibacterial activities, and in the production of gibberellins phytohormones. Catalyzes the conversion of (2E,6E,10E)-geranylgeranyl diphosphate (GGPP) to ent-copalyl diphosphate (ent-CPP). The chain is Ent-copalyl diphosphate synthase 1 from Isodon eriocalyx (Plectranthus eriocalyx).